The primary structure comprises 280 residues: uncharacterized protein (280 aa).

Transmembrane regions (helical) follow at residues I15–L35, I68–G88, and I94–I114.

Belongs to the MscS (TC 1.A.23) family.

The protein localises to the cell membrane. In terms of biological role, may play a role in resistance to osmotic downshock. This is an uncharacterized protein from Bacillus subtilis (strain 168).